Reading from the N-terminus, the 363-residue chain is MELQRIFPLYTATGAARKLTPEAVQRLCDALTLDMGLWKSILTDPRVKIMRSTAFITLRIAPFIPLQTDTTNIAVVVATIYITRPRQMNLPPKTFHVIVNFNYEVSYAMTATLRIYPVENIDHVFGATFKNPIAYPLPTSIPDPRADPTPADLTPTPNLSNYLQPPRLPKNPYACKVISPGVWWSDERRRLYVLAMEPNLIGLCPAGWHARILGSVLNRLLSHADGCDECNHRVHVGALYALPHVTNHAEGCVCWAPCMWRKAGQRELKVEVDIGATQVLFVDVTTCIRITSTKNPRITANLGDVIAGTNASGLSVPVNSSGWQLYMFGETLSRAIINGCGLLQRICFPETQRLSGEPEPTTT.

The protein belongs to the herpesviridae cytoplasmic envelopment protein 2 family. Interacts with cytoplasmic envelopment protein 3 and with the capsid.

Its subcellular location is the virion tegument. The protein resides in the host cytoplasm. It is found in the host nucleus. In terms of biological role, plays a critical role in cytoplasmic virus egress. Participates in the final step of tegumentation and envelope acquisition within the host cytoplasm by directly interacting with the capsid. Upon virion binding to target cell, a signaling cascade is triggered to disrupt the interaction with the capsid, thereby preparing capsid uncoating. In Varicella-zoster virus (strain Dumas) (HHV-3), this protein is Cytoplasmic envelopment protein 2 (44).